A 490-amino-acid chain; its full sequence is Cytochrome P450 2C38 (490 aa).

The N-terminal stretch at 1–20 is a signal peptide; the sequence is MDLVTFLVLTLSSLILLSLW. Heme is bound at residue Cys435.

This sequence belongs to the cytochrome P450 family. The cofactor is heme. As to expression, liver, brain, kidney, and intestine, with trace amounts in lung and heart.

The protein localises to the endoplasmic reticulum membrane. It localises to the microsome membrane. It carries out the reaction an organic molecule + reduced [NADPH--hemoprotein reductase] + O2 = an alcohol + oxidized [NADPH--hemoprotein reductase] + H2O + H(+). The enzyme catalyses (5Z,8Z,11Z,14Z)-eicosatetraenoate + reduced [NADPH--hemoprotein reductase] + O2 = 11,12-epoxy-(5Z,8Z,14Z)-eicosatrienoate + oxidized [NADPH--hemoprotein reductase] + H2O + H(+). The protein operates within lipid metabolism; arachidonate metabolism. Its function is as follows. A cytochrome P450 monooxygenase that primarily catalyzes the epoxidation of 11,12 double bond of (5Z,8Z,11Z,14Z)-eicosatetraenoic acid (arachidonate) forming 11,12-epoxyeicosatrienoic acid (11,12-EET) regioisomer. Mechanistically, uses molecular oxygen inserting one oxygen atom into a substrate, and reducing the second into a water molecule, with two electrons provided by NADPH via cytochrome P450 reductase (CPR; NADPH--hemoprotein reductase). The sequence is that of Cytochrome P450 2C38 from Mus musculus (Mouse).